A 379-amino-acid polypeptide reads, in one-letter code: Caffeyl-CoA reductase-Etf complex subunit CarC (379 aa).

FAD is bound by residues 122–131 (FALTEPGAGS) and 155–157 (FIT). Position 131 (Ser-131) interacts with substrate. Residue 239–242 (DVGR) participates in substrate binding. FAD-binding positions include Arg-267, Gln-278, and 335–339 (QIHGG). Glu-362 serves as the catalytic Proton acceptor. Gly-363 serves as a coordination point for substrate. 364 to 366 (TSQ) is a binding site for FAD.

This sequence belongs to the acyl-CoA dehydrogenase family. As to quaternary structure, part of the homotrimeric caffeyl-CoA reductase-Etf complex composed of (R)-2-hydroxyisocaproyl-CoA dehydratase CarC, and the electron transfer flavoprotein (ETF) alpha (CarE) and beta (CarD) subunits. FAD is required as a cofactor.

The protein localises to the cytoplasm. The catalysed reaction is hydrocaffeoyl-CoA + 2 reduced [2Fe-2S]-[ferredoxin] + 2 NAD(+) = (E)-caffeoyl-CoA + 2 oxidized [2Fe-2S]-[ferredoxin] + 2 NADH. Its function is as follows. The Caffeyl-CoA reductase-Etf complex catalyzes the reduction of caffeyl-CoA to yield hydrocaffeyl-CoA. It couples the endergonic ferredoxin reduction with NADH as reductant to the exergonic reduction of caffeoyl-CoA with the same reductant. It uses the mechanism of electron bifurcation to overcome the steep energy barrier in ferredoxin reduction. Also reduces 4-coumaroyl-CoA and feruloyl-CoA. This Acetobacterium woodii (strain ATCC 29683 / DSM 1030 / JCM 2381 / KCTC 1655 / WB1) protein is Caffeyl-CoA reductase-Etf complex subunit CarC.